We begin with the raw amino-acid sequence, 453 residues long: UDP-N-acetylmuramate--L-alanine ligase (453 aa).

112-118 is an ATP binding site; sequence GTHGKTT.

It belongs to the MurCDEF family.

It is found in the cytoplasm. The enzyme catalyses UDP-N-acetyl-alpha-D-muramate + L-alanine + ATP = UDP-N-acetyl-alpha-D-muramoyl-L-alanine + ADP + phosphate + H(+). Its pathway is cell wall biogenesis; peptidoglycan biosynthesis. Cell wall formation. The chain is UDP-N-acetylmuramate--L-alanine ligase from Lawsonia intracellularis (strain PHE/MN1-00).